The following is a 371-amino-acid chain: DNA primase large subunit PriL (371 aa).

Residues C230, C301, C310, and C317 each coordinate [4Fe-4S] cluster. The interval 337–371 (EREKEEGKEKGNEEKKEKREEHEKKNEKGNEIKEK) is disordered.

This sequence belongs to the eukaryotic-type primase large subunit family. As to quaternary structure, heterodimer of a small subunit (PriS) and a large subunit (PriL). [4Fe-4S] cluster serves as cofactor.

Regulatory subunit of DNA primase, an RNA polymerase that catalyzes the synthesis of short RNA molecules used as primers for DNA polymerase during DNA replication. Stabilizes and modulates the activity of the small subunit, increasing the rate of DNA synthesis, and conferring RNA synthesis capability. The DNA polymerase activity may enable DNA primase to also catalyze primer extension after primer synthesis. May also play a role in DNA repair. This Methanosarcina acetivorans (strain ATCC 35395 / DSM 2834 / JCM 12185 / C2A) protein is DNA primase large subunit PriL.